A 459-amino-acid polypeptide reads, in one-letter code: Cysteine--tRNA ligase (459 aa).

Cys29 contacts Zn(2+). A 'HIGH' region motif is present at residues 31–41; the sequence is MTVYDLCHLGH. Zn(2+) is bound by residues Cys213, His238, and Glu242. Positions 270-274 match the 'KMSKS' region motif; that stretch reads KMSKS. Position 273 (Lys273) interacts with ATP.

Belongs to the class-I aminoacyl-tRNA synthetase family. Monomer. Zn(2+) serves as cofactor.

Its subcellular location is the cytoplasm. It catalyses the reaction tRNA(Cys) + L-cysteine + ATP = L-cysteinyl-tRNA(Cys) + AMP + diphosphate. The sequence is that of Cysteine--tRNA ligase from Albidiferax ferrireducens (strain ATCC BAA-621 / DSM 15236 / T118) (Rhodoferax ferrireducens).